The sequence spans 670 residues: NADH-ubiquinone oxidoreductase chain 5 (670 aa).

The next 19 helical transmembrane spans lie at 1-21, 31-51, 81-101, 111-131, 133-153, 178-198, 211-231, 251-271, 283-303, 311-331, 339-359, 375-395, 421-441, 462-482, 519-539, 566-586, 594-614, 629-649, and 650-670; these read MYIV…IFGH, IAVG…YEIL, LTSI…LYSM, TRFF…VTAD, FVQL…LINF, LFFG…SVIF, LLGY…IGVV, TPVS…FLVL, ILNI…TIGI, VIAY…GLLN, LTTH…VIHG, LMPL…GFPF, AIIG…LLIL, TNMV…GYVT, LLPL…YFNI, FDFL…YDVM, LWEK…FTAL, IVQT…TGFI, and YMEL…IKID.

Belongs to the complex I subunit 5 family.

The protein localises to the mitochondrion inner membrane. It carries out the reaction a ubiquinone + NADH + 5 H(+)(in) = a ubiquinol + NAD(+) + 4 H(+)(out). Functionally, core subunit of the mitochondrial membrane respiratory chain NADH dehydrogenase (Complex I) that is believed to belong to the minimal assembly required for catalysis. Complex I functions in the transfer of electrons from NADH to the respiratory chain. The immediate electron acceptor for the enzyme is believed to be ubiquinone. This is NADH-ubiquinone oxidoreductase chain 5 (nad5) from Dictyostelium discoideum (Social amoeba).